A 497-amino-acid polypeptide reads, in one-letter code: MELVVKSVAAASVKTATLVVPVGEGRKLGAVAKAVDLATDGAISAVLKRGDLAGKPGQTLLLQNLPGLKAERVLLVGSGKDEALGDRAWRKLVASVAGVLKGLNGSDAVLALDDIAVSNRDAHYGKYRLLAETLLDGEYVFDRFKSQKAEPRALKKITLLADKAGLTEVERAARHATAIATGMAFTRDLGNLPPNLCHPSYLAEQAKELGKAHKGLKVEVFDEKKIKDLGMGAFYAVGQGSEQPPRLIVLQYQGAKKSDKPFVLVGKGITFDTGGISLKPGAGMDEMKYDMCGAASVFGTLRAVLELKLPINLVCILACAENMPSGNATRPGDIVTTMSGQTVEILNTDAEGRLVLCDALTYAERFKPQAVIDIATLTGACIVALGSHTAGLLGNNDELIGQLLDAGKRADDRAWQLPLFDEYQEQLDSPFADIANIGGPKAGTITAACFLSRFAKAYNWAHLDIAGTAWVSGGKDKGATGRPVPLLTQYLLDRASA.

2 residues coordinate Mn(2+): Lys267 and Asp272. Residue Lys279 is part of the active site. The Mn(2+) site is built by Asp290, Asp349, and Glu351. Arg353 is an active-site residue.

It belongs to the peptidase M17 family. Mn(2+) serves as cofactor.

The protein resides in the cytoplasm. The catalysed reaction is Release of an N-terminal amino acid, Xaa-|-Yaa-, in which Xaa is preferably Leu, but may be other amino acids including Pro although not Arg or Lys, and Yaa may be Pro. Amino acid amides and methyl esters are also readily hydrolyzed, but rates on arylamides are exceedingly low.. The enzyme catalyses Release of an N-terminal amino acid, preferentially leucine, but not glutamic or aspartic acids.. Functionally, presumably involved in the processing and regular turnover of intracellular proteins. Catalyzes the removal of unsubstituted N-terminal amino acids from various peptides. The protein is Probable cytosol aminopeptidase of Pseudomonas putida (strain W619).